Consider the following 177-residue polypeptide: 2''-aminoglycoside nucleotidyltransferase (177 aa).

The interval methionine 1–tryptophan 92 is N-terminal domain. Mg(2+) contacts are provided by aspartate 44, aspartate 46, and aspartate 86. Residue aspartate 86 is the Proton acceptor of the active site. The segment at alanine 93–alanine 177 is C-terminal domain. A kanamycin A-binding site is contributed by alanine 100.

As to quaternary structure, monomer. The cofactor is Mg(2+).

It carries out the reaction nucleoside triphosphate + gentamicin = diphosphate + 2''-nucleotidylgentamicin.. Functionally, mediates bacterial resistance to kanamycin, gentamicin, dibekacin, sisomicin and tobramycin by adenylating the 2''-hydroxyl group of these antibiotics. In Klebsiella pneumoniae, this protein is 2''-aminoglycoside nucleotidyltransferase.